Consider the following 372-residue polypeptide: Glutamate 5-kinase (372 aa).

Lys6 is a binding site for ATP. Substrate contacts are provided by Ser46, Asp133, and Asn145. Residues 165 to 166 and 207 to 213 each bind ATP; these read TD and TGGMYTK. The region spanning 272-350 is the PUA domain; that stretch reads SGRLFIDEGA…HEIEKILGYK (79 aa).

The protein belongs to the glutamate 5-kinase family.

The protein localises to the cytoplasm. The enzyme catalyses L-glutamate + ATP = L-glutamyl 5-phosphate + ADP. It participates in amino-acid biosynthesis; L-proline biosynthesis; L-glutamate 5-semialdehyde from L-glutamate: step 1/2. Catalyzes the transfer of a phosphate group to glutamate to form L-glutamate 5-phosphate. The polypeptide is Glutamate 5-kinase (Thermoanaerobacter pseudethanolicus (strain ATCC 33223 / 39E) (Clostridium thermohydrosulfuricum)).